Here is a 423-residue protein sequence, read N- to C-terminus: Probable efflux pump mfs2 (423 aa).

11 helical membrane passes run 21–41 (TMAL…IGPV), 49–69 (SIFH…GFAH), 79–99 (LLAG…LGDV), 111–131 (LYLL…GFIV), 138–158 (WMFW…LLFH), 220–240 (AILE…FSAL), 256–278 (YIVI…DYAY), 295–315 (IPLL…YGWA), 319–339 (HLIW…MQIF), 360–380 (AATQ…SNSL), and 392–411 (LLAF…LWRW).

This sequence belongs to the major facilitator superfamily.

The protein localises to the membrane. Functionally, probable efflux pump; part of the gene cluster 27 that mediates the biosynthesis of asparasone A, a sclerotium-specific anthraquinone pigment important for sclerotial survival. This chain is Probable efflux pump mfs2, found in Aspergillus flavus (strain ATCC 200026 / FGSC A1120 / IAM 13836 / NRRL 3357 / JCM 12722 / SRRC 167).